The following is a 206-amino-acid chain: MVSYKLIYFQSRGNGEIARQVFAFAGQEFIDERISKEQWAEIKNMTPFGQVPVLEVDGRQLAQSITIVRYLSKQFGISGKSSWEEAQVDALGDQFKDYRVEARPFFRAKMGFSDGDVDQLYKDLFVPAFNKMYSIFTESLKSSGSGFLVGDSLTWMDLAIAQHSADLLEADGKILDTFLEMKDHQKKIHSIPNVKKWIEKRPVTSR.

In terms of domain architecture, GST N-terminal spans 2 to 79; the sequence is VSYKLIYFQS…YLSKQFGISG (78 aa). Glutathione is bound by residues Y8, W39, K43, 49–51, and 63–64; these read GQV and QS. The GST C-terminal domain maps to 81 to 206; sequence SSWEEAQVDA…WIEKRPVTSR (126 aa).

The protein belongs to the GST superfamily. Sigma family.

The catalysed reaction is RX + glutathione = an S-substituted glutathione + a halide anion + H(+). Functionally, conjugation of reduced glutathione to a wide number of exogenous and endogenous hydrophobic electrophiles. The chain is Probable glutathione S-transferase 9 (gst-9) from Caenorhabditis elegans.